The following is a 298-amino-acid chain: Glycine--tRNA ligase alpha subunit (298 aa).

The protein belongs to the class-II aminoacyl-tRNA synthetase family. As to quaternary structure, tetramer of two alpha and two beta subunits.

The protein localises to the cytoplasm. The enzyme catalyses tRNA(Gly) + glycine + ATP = glycyl-tRNA(Gly) + AMP + diphosphate. The protein is Glycine--tRNA ligase alpha subunit of Helicobacter pylori (strain P12).